The sequence spans 583 residues: Eukaryotic translation initiation factor 3 subunit D (583 aa).

A disordered region spans residues 116 to 150 (GRAQRGAGQRGGRAGFQRVGAGRGQGDRFYDNRGG). Residues 140–149 (QGDRFYDNRG) are compositionally biased toward basic and acidic residues. Residues 298 to 312 (SLDLVTVNENAIDAP) are RNA gate. A disordered region spans residues 561 to 583 (NTFEEDEEAAAEEEEQKAEEDEE). The segment covering 563–583 (FEEDEEAAAEEEEQKAEEDEE) has biased composition (acidic residues).

The protein belongs to the eIF-3 subunit D family. As to quaternary structure, component of the eukaryotic translation initiation factor 3 (eIF-3) complex.

The protein resides in the cytoplasm. Functionally, mRNA cap-binding component of the eukaryotic translation initiation factor 3 (eIF-3) complex, which is involved in protein synthesis of a specialized repertoire of mRNAs and, together with other initiation factors, stimulates binding of mRNA and methionyl-tRNAi to the 40S ribosome. The eIF-3 complex specifically targets and initiates translation of a subset of mRNAs involved in cell proliferation. In the eIF-3 complex, eif3d specifically recognizes and binds the 7-methylguanosine cap of a subset of mRNAs. The sequence is that of Eukaryotic translation initiation factor 3 subunit D from Aspergillus oryzae (strain ATCC 42149 / RIB 40) (Yellow koji mold).